Here is a 177-residue protein sequence, read N- to C-terminus: Putative pre-16S rRNA nuclease (177 aa).

Positions 1–20 are disordered; sequence MVATQQGPDRPGIDDPGRGR.

This sequence belongs to the YqgF nuclease family.

It localises to the cytoplasm. Its function is as follows. Could be a nuclease involved in processing of the 5'-end of pre-16S rRNA. This chain is Putative pre-16S rRNA nuclease, found in Rhodococcus erythropolis (strain PR4 / NBRC 100887).